We begin with the raw amino-acid sequence, 203 residues long: Suppressor of RNA silencing p3 (203 aa).

Belongs to the tenuiviruses p3 protein family. In terms of assembly, homodimer.

It is found in the host cytoplasm. In terms of biological role, acts as a suppressor of RNA-mediated gene silencing, also known as post-transcriptional gene silencing (PTGS), presumably through the binding of dsRNA. In Oryza sativa (Rice), this protein is Suppressor of RNA silencing p3.